A 615-amino-acid chain; its full sequence is Medium-chain acyl-CoA ligase ACSF2, mitochondrial (615 aa).

The N-terminal 49 residues, 1–49 (MAVYLGMLRLGRLCVASLGARGPRTPLSRPWPNSKLQGVRAFSSGMVDC), are a transit peptide targeting the mitochondrion. Lys-179 carries the N6-acetyllysine modification. Lys-182 bears the N6-acetyllysine; alternate mark. Lys-182 carries the N6-succinyllysine; alternate modification. N6-acetyllysine is present on Lys-199. 263–271 (TSGTTGNPK) lines the ATP pocket. N6-acetyllysine is present on residues Lys-340 and Lys-398. Lys-478 carries the N6-succinyllysine modification. Residues Asp-493 and Arg-508 each coordinate ATP. At Lys-510 the chain carries N6-acetyllysine. 2 positions are modified to N6-acetyllysine; alternate: Lys-544 and Lys-570. N6-succinyllysine; alternate occurs at positions 544 and 570. Lys-599 contacts ATP. Lys-599 is subject to N6-succinyllysine.

Belongs to the ATP-dependent AMP-binding enzyme family.

The protein resides in the mitochondrion. The enzyme catalyses a medium-chain fatty acid + ATP + CoA = a medium-chain fatty acyl-CoA + AMP + diphosphate. It carries out the reaction octanoate + ATP + CoA = octanoyl-CoA + AMP + diphosphate. Its function is as follows. Acyl-CoA synthases catalyze the initial reaction in fatty acid metabolism, by forming a thioester with CoA. Has some preference toward medium-chain substrates. Plays a role in adipocyte differentiation. The polypeptide is Medium-chain acyl-CoA ligase ACSF2, mitochondrial (Rattus norvegicus (Rat)).